Here is a 114-residue protein sequence, read N- to C-terminus: Nascent polypeptide-associated complex protein (114 aa).

One can recognise an NAC-A/B domain in the interval 5 to 69 (PSQFKNLERM…AKEAQKEEPK (65 aa)).

The protein belongs to the NAC-alpha family. As to quaternary structure, homodimer. Interacts with the ribosome. Binds ribosomal RNA.

Its function is as follows. Contacts the emerging nascent chain on the ribosome. The protein is Nascent polypeptide-associated complex protein of Sulfurisphaera tokodaii (strain DSM 16993 / JCM 10545 / NBRC 100140 / 7) (Sulfolobus tokodaii).